The sequence spans 203 residues: Thymidylate kinase (203 aa).

10–17 is an ATP binding site; it reads GIDGAGKS.

This sequence belongs to the thymidylate kinase family.

The enzyme catalyses dTMP + ATP = dTDP + ADP. Its function is as follows. Phosphorylation of dTMP to form dTDP in both de novo and salvage pathways of dTTP synthesis. The chain is Thymidylate kinase from Cupriavidus pinatubonensis (strain JMP 134 / LMG 1197) (Cupriavidus necator (strain JMP 134)).